The primary structure comprises 395 residues: Ribosomal RNA large subunit methyltransferase G (395 aa).

Belongs to the methyltransferase superfamily. RlmG family.

The protein localises to the cytoplasm. The catalysed reaction is guanosine(1835) in 23S rRNA + S-adenosyl-L-methionine = N(2)-methylguanosine(1835) in 23S rRNA + S-adenosyl-L-homocysteine + H(+). Specifically methylates the guanine in position 1835 (m2G1835) of 23S rRNA. The protein is Ribosomal RNA large subunit methyltransferase G of Yersinia pestis (strain Pestoides F).